The sequence spans 290 residues: Dihydroorotate dehydrogenase B (NAD(+)), catalytic subunit (290 aa).

Residues serine 17 and 42–43 (KT) contribute to the FMN site. Substrate contacts are provided by residues lysine 42, 67 to 71 (NAIGL), and asparagine 117. Asparagine 117 is an FMN binding site. Serine 120 acts as the Nucleophile in catalysis. FMN-binding residues include lysine 152 and isoleucine 177. 178-179 (NT) is a binding site for substrate. FMN-binding positions include glycine 203, 229 to 230 (GG), and 251 to 252 (GT).

This sequence belongs to the dihydroorotate dehydrogenase family. Type 1 subfamily. As to quaternary structure, heterotetramer of 2 PyrK and 2 PyrD type B subunits. Requires FMN as cofactor.

Its subcellular location is the cytoplasm. It catalyses the reaction (S)-dihydroorotate + NAD(+) = orotate + NADH + H(+). It functions in the pathway pyrimidine metabolism; UMP biosynthesis via de novo pathway; orotate from (S)-dihydroorotate (NAD(+) route): step 1/1. Its function is as follows. Catalyzes the conversion of dihydroorotate to orotate with NAD(+) as electron acceptor. The chain is Dihydroorotate dehydrogenase B (NAD(+)), catalytic subunit (pyrD) from Saccharolobus solfataricus (strain ATCC 35092 / DSM 1617 / JCM 11322 / P2) (Sulfolobus solfataricus).